Consider the following 460-residue polypeptide: Argininosuccinate lyase (460 aa).

It belongs to the lyase 1 family. Argininosuccinate lyase subfamily.

The protein localises to the cytoplasm. The catalysed reaction is 2-(N(omega)-L-arginino)succinate = fumarate + L-arginine. It functions in the pathway amino-acid biosynthesis; L-arginine biosynthesis; L-arginine from L-ornithine and carbamoyl phosphate: step 3/3. The chain is Argininosuccinate lyase from Maridesulfovibrio salexigens (strain ATCC 14822 / DSM 2638 / NCIMB 8403 / VKM B-1763) (Desulfovibrio salexigens).